A 356-amino-acid chain; its full sequence is DNA integrity scanning protein DisA (356 aa).

The region spanning 11–149 (VHTMRDTLQR…EGKSHILEEP (139 aa)) is the DAC domain. ATP-binding positions include glycine 78, leucine 96, and 109–113 (TRHRS).

This sequence belongs to the DisA family. As to quaternary structure, homooctamer. Mg(2+) serves as cofactor.

It catalyses the reaction 2 ATP = 3',3'-c-di-AMP + 2 diphosphate. In terms of biological role, participates in a DNA-damage check-point. DisA forms globular foci that rapidly scan along the chromosomes searching for lesions. Also has diadenylate cyclase activity, catalyzing the condensation of 2 ATP molecules into cyclic di-AMP (c-di-AMP). c-di-AMP likely acts as a signaling molecule that may couple DNA integrity with a cellular process. In Corynebacterium efficiens (strain DSM 44549 / YS-314 / AJ 12310 / JCM 11189 / NBRC 100395), this protein is DNA integrity scanning protein DisA.